Here is a 344-residue protein sequence, read N- to C-terminus: GLIPR1-like protein 2 (344 aa).

Positions 58–192 constitute an SCP domain; that stretch reads VNLHNELRGD…IHAAIFICNY (135 aa). Residues 254–274 traverse the membrane as a helical segment; it reads TFILLLRILCFILCVITVLIV. Composition is skewed to acidic residues over residues 292 to 304 and 312 to 334; these read EESE…EEKE and EMEM…EEET. Residues 292 to 344 form a disordered region; sequence EESEAGNEEEEKEEEKKEKEEMEMEIMEMEEEKEEREEEEEETQKEKMEEEEK. Basic and acidic residues predominate over residues 335 to 344; it reads QKEKMEEEEK.

The protein belongs to the CRISP family. Highly expressed in testis. Detected in prostate, kidney, bladder, lung and bone marrow.

The protein localises to the membrane. This is GLIPR1-like protein 2 (GLIPR1L2) from Homo sapiens (Human).